Here is a 329-residue protein sequence, read N- to C-terminus: Putative helicase 109L (329 aa).

Residues 105–259 form the Helicase ATP-binding domain; it reads LTLLTQHKSC…LFDMFFGPEM (155 aa). 118 to 125 contributes to the ATP binding site; sequence CYTGFGKT. A DEAH box motif is present at residues 212–215; that stretch reads DEAH.

Belongs to the DEAD box helicase family. DEAH subfamily.

The chain is Putative helicase 109L from Invertebrate iridescent virus 3 (IIV-3).